The primary structure comprises 280 residues: Shikimate dehydrogenase (NADP(+)) (280 aa).

Shikimate contacts are provided by residues 15 to 17 and T62; that span reads SMS. K66 functions as the Proton acceptor in the catalytic mechanism. NADP(+) is bound at residue E78. N87 and D102 together coordinate shikimate. NADP(+) is bound by residues 127 to 131, 151 to 156, and I219; these read GAGGA and NRTLEK. Shikimate is bound at residue Y221. G242 provides a ligand contact to NADP(+).

It belongs to the shikimate dehydrogenase family. As to quaternary structure, homodimer.

The catalysed reaction is shikimate + NADP(+) = 3-dehydroshikimate + NADPH + H(+). It participates in metabolic intermediate biosynthesis; chorismate biosynthesis; chorismate from D-erythrose 4-phosphate and phosphoenolpyruvate: step 4/7. Involved in the biosynthesis of the chorismate, which leads to the biosynthesis of aromatic amino acids. Catalyzes the reversible NADPH linked reduction of 3-dehydroshikimate (DHSA) to yield shikimate (SA). In Bacillus subtilis (strain 168), this protein is Shikimate dehydrogenase (NADP(+)).